A 229-amino-acid chain; its full sequence is Non-structural protein P8 (229 aa).

The next 2 membrane-spanning stretches (helical) occupy residues 119–139 (IIHM…VCTL) and 162–182 (SLNP…MVCA).

This sequence belongs to the orbivirus NS3 family. As to quaternary structure, forms homooligomers via coiled-coil motif. Interacts with host OPTN; this interaction inhibits innate immune response.

It is found in the host cell membrane. The protein localises to the host Golgi apparatus. Its function is as follows. Plays a role in the inhibition of host innate immune response. Interacts with host OPTN and thus inhibits the recruitment of TBK1 to the host Golgi apparatus. In turn, downstream partner IRF3 cannot be activated and IFN-beta production is impaired. Facilitates viral particle release either by increasing plasma membrane permeability through a viroporin-like activity or by viral budding. This is Non-structural protein P8 (Segment-10) from Bluetongue virus 17 (isolate USA) (BTV 17).